We begin with the raw amino-acid sequence, 70 residues long: Kappa-conotoxin-like Sx11.2 (70 aa).

The first 26 residues, 1–26 (MMFRVTSVGCLLLVIVFLNLVVPTSA), serve as a signal peptide directing secretion. Cystine bridges form between cysteine 27–cysteine 41, cysteine 34–cysteine 46, cysteine 40–cysteine 50, and cysteine 45–cysteine 54. 4-carboxyglutamate is present on residues glutamate 30, glutamate 35, and glutamate 44. Proline 53 is subject to 4-hydroxyproline. Residue proline 57 is modified to Proline amide. Residues 61 to 70 (SKLQEFFRQR) constitute a propeptide that is removed on maturation.

The protein belongs to the conotoxin I2 superfamily. In terms of tissue distribution, expressed by the venom duct.

It is found in the secreted. Functionally, modulator of potassium channels, specifically up-modulates the calcium and voltage-gated BK channels, has no effect on single channel conductance, but increases the open probability of BK channels. This is Kappa-conotoxin-like Sx11.2 from Conus striolatus (Cone snail).